Consider the following 767-residue polypeptide: Ribonucleoside-diphosphate reductase subunit alpha (767 aa).

A disordered region spans residues 1 to 30 (MHPTLISAPISSSANDAHAGTSQGSHQGHR). Residues 9 to 26 (PISSSANDAHAGTSQGSH) show a composition bias toward polar residues. The region spanning 31 to 120 (IQVIRRDGSS…VWSLWKDTLV (90 aa)) is the ATP-cone domain. Substrate-binding positions include threonine 228, 243–244 (SC), glycine 272, 460–464 (NLCCE), and 631–635 (PNTSS). A disulfide bond links cysteine 244 and cysteine 478. The active-site Proton acceptor is the asparagine 460. Residue cysteine 462 is the Cysteine radical intermediate of the active site. Glutamate 464 (proton acceptor) is an active-site residue.

It belongs to the ribonucleoside diphosphate reductase large chain family. Tetramer of two alpha and two beta subunits.

It catalyses the reaction a 2'-deoxyribonucleoside 5'-diphosphate + [thioredoxin]-disulfide + H2O = a ribonucleoside 5'-diphosphate + [thioredoxin]-dithiol. With respect to regulation, under complex allosteric control mediated by deoxynucleoside triphosphates and ATP binding. The type of nucleotide bound at the specificity site determines substrate preference. It seems probable that ATP makes the enzyme reduce CDP and UDP, dGTP favors ADP reduction and dTTP favors GDP reduction. Its function is as follows. Provides the precursors necessary for DNA synthesis. Catalyzes the biosynthesis of deoxyribonucleotides from the corresponding ribonucleotides. This Synechocystis sp. (strain ATCC 27184 / PCC 6803 / Kazusa) protein is Ribonucleoside-diphosphate reductase subunit alpha (nrdA).